A 301-amino-acid polypeptide reads, in one-letter code: 3-dehydroquinate dehydratase (301 aa).

Positions 1 to 221 (MLQYGVLICG…YYAALLALGI (221 aa)) are 3-dehydroquinate dehydratase. 3-dehydroquinate contacts are provided by residues 32 to 34 (ELR) and Arg63. Catalysis depends on His119, which acts as the Proton donor/acceptor. The active-site Schiff-base intermediate with substrate is the Lys145. The 3-dehydroquinate site is built by Arg183, Thr202, and Gln206. The 80-residue stretch at 222–301 (TPSGGGLPAL…QMCKAVQLVA (80 aa)) folds into the Chorismate mutase domain.

Belongs to the type-I 3-dehydroquinase family. Homodimer.

The catalysed reaction is 3-dehydroquinate = 3-dehydroshikimate + H2O. Its pathway is metabolic intermediate biosynthesis; chorismate biosynthesis; chorismate from D-erythrose 4-phosphate and phosphoenolpyruvate: step 3/7. Involved in the third step of the chorismate pathway, which leads to the biosynthesis of aromatic amino acids. Catalyzes the cis-dehydration of 3-dehydroquinate (DHQ) and introduces the first double bond of the aromatic ring to yield 3-dehydroshikimate. This chain is 3-dehydroquinate dehydratase, found in Pyrobaculum aerophilum (strain ATCC 51768 / DSM 7523 / JCM 9630 / CIP 104966 / NBRC 100827 / IM2).